A 429-amino-acid chain; its full sequence is Glutamate-1-semialdehyde 2,1-aminomutase (429 aa).

K265 carries the post-translational modification N6-(pyridoxal phosphate)lysine.

Belongs to the class-III pyridoxal-phosphate-dependent aminotransferase family. HemL subfamily. As to quaternary structure, homodimer. It depends on pyridoxal 5'-phosphate as a cofactor.

The protein localises to the cytoplasm. It catalyses the reaction (S)-4-amino-5-oxopentanoate = 5-aminolevulinate. The protein operates within porphyrin-containing compound metabolism; protoporphyrin-IX biosynthesis; 5-aminolevulinate from L-glutamyl-tRNA(Glu): step 2/2. This is Glutamate-1-semialdehyde 2,1-aminomutase from Acidobacterium capsulatum (strain ATCC 51196 / DSM 11244 / BCRC 80197 / JCM 7670 / NBRC 15755 / NCIMB 13165 / 161).